The sequence spans 748 residues: Transcription factor hmgR (748 aa).

The zn(2)-C6 fungal-type DNA-binding region spans 24 to 59 (CISCRQRKAKCDLGTGPDGLPLGPPCAKCRREQKPC). Disordered stretches follow at residues 108–142 (SQED…QIDL) and 661–683 (REST…DEHA).

The protein localises to the nucleus. Functionally, transcription factor; part of the L-tyrosine degradation gene cluster that mediates the biosynthesis of the brownish pigment pyomelanin as an alternative melanin. Acts as a transcriptional activator for the genes of the tyrosine degradation cluster. This Aspergillus fumigatus (strain ATCC MYA-4609 / CBS 101355 / FGSC A1100 / Af293) (Neosartorya fumigata) protein is Transcription factor hmgR.